Here is a 345-residue protein sequence, read N- to C-terminus: Fructose-1,6-bisphosphatase class 1 2 (345 aa).

Residues E90, D109, L111, and D112 each coordinate Mg(2+). Residues D112–S115 and N200 each bind substrate. Mg(2+) is bound at residue E272.

This sequence belongs to the FBPase class 1 family. As to quaternary structure, homotetramer. The cofactor is Mg(2+).

It is found in the cytoplasm. It catalyses the reaction beta-D-fructose 1,6-bisphosphate + H2O = beta-D-fructose 6-phosphate + phosphate. The protein operates within carbohydrate biosynthesis; gluconeogenesis. This chain is Fructose-1,6-bisphosphatase class 1 2, found in Nitrobacter hamburgensis (strain DSM 10229 / NCIMB 13809 / X14).